The primary structure comprises 85 residues: Large ribosomal subunit protein bL31B (85 aa).

The protein belongs to the bacterial ribosomal protein bL31 family. Type B subfamily. As to quaternary structure, part of the 50S ribosomal subunit.

In Kocuria rhizophila (strain ATCC 9341 / DSM 348 / NBRC 103217 / DC2201), this protein is Large ribosomal subunit protein bL31B.